We begin with the raw amino-acid sequence, 309 residues long: Homoserine O-succinyltransferase (309 aa).

Cys142 serves as the catalytic Acyl-thioester intermediate. Substrate-binding residues include Lys163 and Ser192. The Proton acceptor role is filled by His235. Residue Glu237 is part of the active site. Arg249 is a binding site for substrate.

It belongs to the MetA family.

It is found in the cytoplasm. The catalysed reaction is L-homoserine + succinyl-CoA = O-succinyl-L-homoserine + CoA. Its pathway is amino-acid biosynthesis; L-methionine biosynthesis via de novo pathway; O-succinyl-L-homoserine from L-homoserine: step 1/1. Transfers a succinyl group from succinyl-CoA to L-homoserine, forming succinyl-L-homoserine. In Photorhabdus laumondii subsp. laumondii (strain DSM 15139 / CIP 105565 / TT01) (Photorhabdus luminescens subsp. laumondii), this protein is Homoserine O-succinyltransferase.